The primary structure comprises 391 residues: B2 bradykinin receptor (391 aa).

At 1–60 (MFSPWKISMFLSVREDSVPTTASFSADMLNVTLQGPTLNGTFAQSKCPQVEWLGWLNTIQ) the chain is on the extracellular side. 2 N-linked (GlcNAc...) asparagine glycosylation sites follow: Asn30 and Asn39. A helical transmembrane segment spans residues 61–84 (PPFLWVLFVLATLENIFVLSVFCL). The Cytoplasmic segment spans residues 85–93 (HKSSCTVAE). The helical transmembrane segment at 94 to 118 (IYLGNLAAADLILACGLPFWAITIS) threads the bilayer. The Extracellular segment spans residues 119–131 (NNFDWLFGETLCR). Cys130 and Cys211 are oxidised to a cystine. The helical transmembrane segment at 132 to 153 (VVNAIISMNLYSSICFLMLVSI) threads the bilayer. Over 154 to 175 (DRYLALVKTMSMGRMRGVRWAK) the chain is Cytoplasmic. Tyr156 carries the phosphotyrosine modification. Residues 176-198 (LYSLVIWGCTLLLSSPMLVFRTM) form a helical membrane-spanning segment. Residues 199–221 (KEYSDEGHNVTACVISYPSLIWE) lie on the Extracellular side of the membrane. An N-linked (GlcNAc...) asparagine glycan is attached at Asn207. Residues 222 to 248 (VFTNMLLNVVGFLLPLSVITFCTMQIM) form a helical membrane-spanning segment. Residues 249-267 (QVLRNNEMQKFKEIQTERR) are Cytoplasmic-facing. The chain crosses the membrane as a helical span at residues 268–292 (ATVLVLVVLLLFIICWLPFQISTFL). Residues 293-311 (DTLHRLGILSSCQDERIID) lie on the Extracellular side of the membrane. The helical transmembrane segment at 312-335 (VITQIASFMAYSNSCLNPLVYVIV) threads the bilayer. Residues 336–391 (GKRFRKKSWEVYQGVCQKGGCRSEPIQMENSMGTLRTSISVERQIHKLQDWAGSRQ) lie on the Cytoplasmic side of the membrane. At Tyr347 the chain carries Phosphotyrosine. Cys351 carries the S-palmitoyl cysteine lipid modification. Ser366 carries the post-translational modification Phosphoserine. Thr369 carries the post-translational modification Phosphothreonine. A phosphoserine; by GRK6 mark is found at Ser373 and Ser375.

Belongs to the G-protein coupled receptor 1 family. Bradykinin receptor subfamily. BDKRB2 sub-subfamily. In terms of assembly, forms a complex with PECAM1 and GNAQ. Interacts with PECAM1. In terms of tissue distribution, ubiquitous. Widespread in normal smooth muscle tissue and neurons.

The protein localises to the cell membrane. In terms of biological role, receptor for bradykinin. It is associated with G proteins that activate a phosphatidylinositol-calcium second messenger system. The polypeptide is B2 bradykinin receptor (BDKRB2) (Homo sapiens (Human)).